The sequence spans 199 residues: 5'-deoxynucleotidase HDDC2 (199 aa).

Ala2 is subject to N-acetylalanine. Ser5 is subject to Phosphoserine. One can recognise an HD domain in the interval 41–143 (VSDHMYRMAV…VKQLDQCEMI (103 aa)). The a divalent metal cation site is built by His44, His72, Asp73, Glu76, Asp81, Ile82, and Asp138. Ser199 is subject to Phosphoserine.

Belongs to the HDDC2 family. Homodimer. It depends on Mn(2+) as a cofactor. Co(2+) is required as a cofactor. The cofactor is Mg(2+).

It carries out the reaction a 2'-deoxyribonucleoside 5'-phosphate + H2O = a 2'-deoxyribonucleoside + phosphate. Functionally, catalyzes the dephosphorylation of the nucleoside 5'-monophosphates deoxyadenosine monophosphate (dAMP), deoxycytidine monophosphate (dCMP), deoxyguanosine monophosphate (dGMP) and deoxythymidine monophosphate (dTMP). The protein is 5'-deoxynucleotidase HDDC2 (Hddc2) of Mus musculus (Mouse).